A 350-amino-acid polypeptide reads, in one-letter code: Ion-translocating oxidoreductase complex subunit D (350 aa).

Helical transmembrane passes span 36–56 (FYFF…IALL), 68–88 (PIIS…IGVS), 89–109 (IPSI…IVIV), and 120–140 (IFNP…VQMT). An FMN phosphoryl threonine modification is found at Thr185. Transmembrane regions (helical) follow at residues 212 to 232 (GFGV…LAML), 239 to 259 (WQIS…GYLL), 265 to 285 (IGPL…FIAT), 291 to 311 (ATSV…VYVI), and 315 to 335 (GGYP…APFI).

This sequence belongs to the NqrB/RnfD family. As to quaternary structure, the complex is composed of six subunits: RnfA, RnfB, RnfC, RnfD, RnfE and RnfG. The cofactor is FMN.

Its subcellular location is the cell inner membrane. In terms of biological role, part of a membrane-bound complex that couples electron transfer with translocation of ions across the membrane. This Shewanella piezotolerans (strain WP3 / JCM 13877) protein is Ion-translocating oxidoreductase complex subunit D.